A 186-amino-acid chain; its full sequence is Meiotically up-regulated gene 163 protein (186 aa).

The protein localises to the mitochondrion. In terms of biological role, has a role in meiosis. The chain is Meiotically up-regulated gene 163 protein (mug163) from Schizosaccharomyces pombe (strain 972 / ATCC 24843) (Fission yeast).